The sequence spans 569 residues: Protein misato homolog 1 (569 aa).

Phosphoserine occurs at positions 41 and 495.

It belongs to the misato family.

Its subcellular location is the mitochondrion outer membrane. The protein resides in the cytoplasm. Involved in the regulation of mitochondrial distribution and morphology. Required for mitochondrial fusion and mitochondrial network formation. This Macaca fascicularis (Crab-eating macaque) protein is Protein misato homolog 1 (MSTO1).